The primary structure comprises 391 residues: Probable sugar efflux transporter (391 aa).

Transmembrane regions (helical) follow at residues 16–36 (VFVFSLSAFIFNTTEFVPVAL), 51–71 (VGLMITAYAWVVSLGSLPLML), 82–102 (LLFLFALFILSHILSALAWNF), 110–130 (MGIAFTHSIFWSITASLVIRV), 138–158 (QALGLLALGSSLAMILGLPLG), 170–190 (TFGVIGGVATLIALLMWKLLP), 210–230 (PLLMGIYLLVIMVISGHFTTY), 247–267 (ITTLMLFVFGLAGVAGSFLFS), 277–297 (FIAFAMVLVICPQLLLFVFKN), 300–320 (WVIFLQIFLWGIGITSLTIAL), 338–358 (IFSGSYNVGIGSGALFGSIVI), and 361–381 (LGLEYIGFVGGALGLLALFWL).

It belongs to the major facilitator superfamily. SotB (TC 2.A.1.2) family.

It is found in the cell inner membrane. Its function is as follows. Involved in the efflux of sugars. The physiological role may be the reduction of the intracellular concentration of toxic sugars or sugar metabolites. The sequence is that of Probable sugar efflux transporter from Helicobacter pylori (strain HPAG1).